The sequence spans 511 residues: Maturase K (511 aa).

Belongs to the intron maturase 2 family. MatK subfamily.

It is found in the plastid. The protein localises to the chloroplast. In terms of biological role, usually encoded in the trnK tRNA gene intron. Probably assists in splicing its own and other chloroplast group II introns. This chain is Maturase K, found in Hordeum vulgare (Barley).